The following is a 685-amino-acid chain: DNA ligase (685 aa).

NAD(+) is bound by residues 39–43 (DGEYD), 88–89 (SL), and Glu-119. Lys-121 serves as the catalytic N6-AMP-lysine intermediate. Arg-142, Glu-182, Lys-302, and Lys-326 together coordinate NAD(+). Residues Cys-420, Cys-423, Cys-438, and Cys-443 each coordinate Zn(2+). Residues 606 to 685 (DNATFFSEKR…QTFLEHLDRG (80 aa)) form the BRCT domain.

Belongs to the NAD-dependent DNA ligase family. LigA subfamily. It depends on Mg(2+) as a cofactor. The cofactor is Mn(2+).

The catalysed reaction is NAD(+) + (deoxyribonucleotide)n-3'-hydroxyl + 5'-phospho-(deoxyribonucleotide)m = (deoxyribonucleotide)n+m + AMP + beta-nicotinamide D-nucleotide.. Its function is as follows. DNA ligase that catalyzes the formation of phosphodiester linkages between 5'-phosphoryl and 3'-hydroxyl groups in double-stranded DNA using NAD as a coenzyme and as the energy source for the reaction. It is essential for DNA replication and repair of damaged DNA. The polypeptide is DNA ligase (Desulforapulum autotrophicum (strain ATCC 43914 / DSM 3382 / VKM B-1955 / HRM2) (Desulfobacterium autotrophicum)).